Reading from the N-terminus, the 198-residue chain is Recombination protein RecR (198 aa).

The C4-type zinc finger occupies 56-71 (CKICHSLTENEICDIC). Positions 79–174 (HLLCVVESPA…HMTRIAQGVP (96 aa)) constitute a Toprim domain.

The protein belongs to the RecR family.

In terms of biological role, may play a role in DNA repair. It seems to be involved in an RecBC-independent recombinational process of DNA repair. It may act with RecF and RecO. The protein is Recombination protein RecR of Acinetobacter baylyi (strain ATCC 33305 / BD413 / ADP1).